Consider the following 415-residue polypeptide: Serine/threonine transporter SstT (415 aa).

A run of 8 helical transmembrane segments spans residues Ile-21–Ala-41, Leu-45–Val-65, Phe-85–Phe-105, Ala-142–Phe-162, Leu-193–Gly-213, Leu-217–Val-237, Val-289–Leu-309, and Val-331–Ile-351.

Belongs to the dicarboxylate/amino acid:cation symporter (DAACS) (TC 2.A.23) family.

The protein localises to the cell inner membrane. It carries out the reaction L-serine(in) + Na(+)(in) = L-serine(out) + Na(+)(out). It catalyses the reaction L-threonine(in) + Na(+)(in) = L-threonine(out) + Na(+)(out). In terms of biological role, involved in the import of serine and threonine into the cell, with the concomitant import of sodium (symport system). This chain is Serine/threonine transporter SstT, found in Pectobacterium atrosepticum (strain SCRI 1043 / ATCC BAA-672) (Erwinia carotovora subsp. atroseptica).